The sequence spans 217 residues: Response regulator RR06 (217 aa).

The region spanning 2–115 is the Response regulatory domain; it reads NILVADDEEM…LLVKRIKALI (114 aa). Asp51 bears the 4-aspartylphosphate mark. A DNA-binding region (ompR/PhoB-type) is located at residues 122–217; sequence EDIWRYQDVT…VKNVGYKISL (96 aa).

Post-translationally, phosphorylated at threonine residues by StkP; threonine phosphorylation enhances RR06 binding to DNA and may also increase expression of CbpA. May be de-phosphorylated by PhpP.

In terms of biological role, member of the two-component regulatory system HK06/RR06 involved in regulation of target genes, including choline-binding protein CbpA. Binds to the promoter region of CbpA and directly activates transcription. In Streptococcus pneumoniae serotype 2 (strain D39 / NCTC 7466), this protein is Response regulator RR06.